We begin with the raw amino-acid sequence, 236 residues long: OPEP-2 protein (236 aa).

The polypeptide is OPEP-2 protein (OPEP-2) (Orgyia pseudotsugata (Douglas-fir tussock moth)).